Reading from the N-terminus, the 592-residue chain is Probable translation initiation factor IF-2 (592 aa).

A tr-type G domain is found at 5 to 226 (IRSPFVVVMG…AGVSQRFIPR (222 aa)). Residues 14-21 (GHVDVGKT) form a G1 region. 14-21 (GHVDVGKT) is a GTP binding site. The tract at residues 39-43 (MITQH) is G2. The G3 stretch occupies residues 80–83 (DTPG). GTP contacts are provided by residues 80-84 (DTPGH) and 134-137 (NKLD). Residues 134–137 (NKLD) form a G4 region. The segment at 202–204 (SAV) is G5.

This sequence belongs to the TRAFAC class translation factor GTPase superfamily. Classic translation factor GTPase family. IF-2 subfamily.

In terms of biological role, function in general translation initiation by promoting the binding of the formylmethionine-tRNA to ribosomes. Seems to function along with eIF-2. The protein is Probable translation initiation factor IF-2 of Pyrobaculum calidifontis (strain DSM 21063 / JCM 11548 / VA1).